A 207-amino-acid polypeptide reads, in one-letter code: BTB/POZ domain-containing protein At1g01640 (207 aa).

Positions 24–94 constitute a BTB domain; it reads TDVLVKPGEE…LYSGNLKAPY (71 aa).

As to quaternary structure, interacts with CUL3A.

It participates in protein modification; protein ubiquitination. May act as a substrate-specific adapter of an E3 ubiquitin-protein ligase complex (CUL3-RBX1-BTB) which mediates the ubiquitination and subsequent proteasomal degradation of target proteins. The protein is BTB/POZ domain-containing protein At1g01640 of Arabidopsis thaliana (Mouse-ear cress).